The sequence spans 195 residues: Probable GTP-binding protein EngB (195 aa).

One can recognise an EngB-type G domain in the interval 24-195 (DWPEIALAGR…EAWTAILKYL (172 aa)). GTP is bound by residues 32-39 (GRSNVGKS), 59-63 (GKTQL), 77-80 (DVPG), 144-147 (TKAD), and 176-178 (FSS). 2 residues coordinate Mg(2+): serine 39 and threonine 61.

The protein belongs to the TRAFAC class TrmE-Era-EngA-EngB-Septin-like GTPase superfamily. EngB GTPase family. Mg(2+) is required as a cofactor.

Necessary for normal cell division and for the maintenance of normal septation. The sequence is that of Probable GTP-binding protein EngB from Lactococcus lactis subsp. cremoris (strain MG1363).